The primary structure comprises 432 residues: Enolase (432 aa).

Residue Gln-163 participates in (2R)-2-phosphoglycerate binding. Glu-205 acts as the Proton donor in catalysis. Residues Asp-242, Glu-287, and Asp-314 each contribute to the Mg(2+) site. Lys-339, Arg-368, Ser-369, and Lys-390 together coordinate (2R)-2-phosphoglycerate. The Proton acceptor role is filled by Lys-339.

The protein belongs to the enolase family. It depends on Mg(2+) as a cofactor.

The protein resides in the cytoplasm. It localises to the secreted. The protein localises to the cell surface. It catalyses the reaction (2R)-2-phosphoglycerate = phosphoenolpyruvate + H2O. The protein operates within carbohydrate degradation; glycolysis; pyruvate from D-glyceraldehyde 3-phosphate: step 4/5. In terms of biological role, catalyzes the reversible conversion of 2-phosphoglycerate (2-PG) into phosphoenolpyruvate (PEP). It is essential for the degradation of carbohydrates via glycolysis. The protein is Enolase of Myxococcus xanthus (strain DK1622).